The sequence spans 349 residues: Isopentenyl-diphosphate delta-isomerase (349 aa).

Substrate is bound at residue 6-7 (RK). Residues 62 to 64 (AMT), serine 93, and asparagine 122 contribute to the FMN site. Residue glutamine 152 participates in substrate binding. Residue glutamate 153 participates in Mg(2+) binding. Residues lysine 184, threonine 214, 258–259 (GG), and 280–281 (AG) each bind FMN.

The protein belongs to the IPP isomerase type 2 family. Homooctamer. Dimer of tetramers. FMN is required as a cofactor. Requires NADPH as cofactor. It depends on Mg(2+) as a cofactor.

It localises to the cytoplasm. The enzyme catalyses isopentenyl diphosphate = dimethylallyl diphosphate. Functionally, involved in the biosynthesis of isoprenoids. Catalyzes the 1,3-allylic rearrangement of the homoallylic substrate isopentenyl (IPP) to its allylic isomer, dimethylallyl diphosphate (DMAPP). This chain is Isopentenyl-diphosphate delta-isomerase, found in Bacillus licheniformis (strain ATCC 14580 / DSM 13 / JCM 2505 / CCUG 7422 / NBRC 12200 / NCIMB 9375 / NCTC 10341 / NRRL NRS-1264 / Gibson 46).